The sequence spans 254 residues: Hydroxyacylglutathione hydrolase (254 aa).

7 residues coordinate Zn(2+): His-53, His-55, Asp-57, His-58, His-111, Asp-128, and His-166.

The protein belongs to the metallo-beta-lactamase superfamily. Glyoxalase II family. In terms of assembly, monomer. It depends on Zn(2+) as a cofactor.

The enzyme catalyses an S-(2-hydroxyacyl)glutathione + H2O = a 2-hydroxy carboxylate + glutathione + H(+). The protein operates within secondary metabolite metabolism; methylglyoxal degradation; (R)-lactate from methylglyoxal: step 2/2. In terms of biological role, thiolesterase that catalyzes the hydrolysis of S-D-lactoyl-glutathione to form glutathione and D-lactic acid. In Aeromonas salmonicida (strain A449), this protein is Hydroxyacylglutathione hydrolase.